A 485-amino-acid polypeptide reads, in one-letter code: MKPSLKRRLLLLSRKFAKASIRKLLRQSSFSSHEFLLQAPFPAMSWYRRTKLVFDSLRRNINPKILPRSHVTSRINNPIGSSNPSAKFSSISSREVGLRSWTSLGRNTNRIAYNPFLSQPKRYYYVDRYQVRHFKPRGPGRWFQNPRTVFTVVLVGSVGLITLIVGNTETIPYTKRTHFILLSKPMEKLLGETQFEQIKKTYQGKILPATHPESIRVRLIAKEVIDALQRGLSNERVWSDLGYASTESSLGGGSDKGVKEMEMAMSGEDTMTDMKWSKEDQVLDDQWIQKSRKKDSKAHAATSHLEGISWEVLVVNEPIVNAFCLPAGKIVVFTGLLNHFKSDAEVATVIGHEVGHAVARHVAEGITKNLWFAILQLVLYQFVMPDLVNTMSALFLRLPFSRKMEIEADYIGLLLLASAGYDPRVAPTVYEKLGKLGGDALGDYLSTHPSGKKRSKLLAQANVMEEALMIYREVQAGRTGVEGFL.

The transit peptide at 1–16 (MKPSLKRRLLLLSRKF) directs the protein to the mitochondrion. Over 17-147 (AKASIRKLLR…GPGRWFQNPR (131 aa)) the chain is Mitochondrial matrix. Residues 148–168 (TVFTVVLVGSVGLITLIVGNT) form a helical membrane-spanning segment. Residues 169-485 (ETIPYTKRTH…AGRTGVEGFL (317 aa)) are Mitochondrial intermembrane-facing. H352 is a binding site for Zn(2+). E353 is a catalytic residue. H356 and E405 together coordinate Zn(2+). A required for protease activation region spans residues 456 to 485 (KLLAQANVMEEALMIYREVQAGRTGVEGFL).

This sequence belongs to the peptidase M48A family. As to quaternary structure, homooligomer. Requires Zn(2+) as cofactor.

It localises to the mitochondrion inner membrane. Functionally, protease that is part of the quality control system in the inner membrane of mitochondria. Metalloendopeptidase that modulates the oxidative phosphorylation (OXPHOS) system and plant growth. Involved in tolerance mechanisms to heat, osmotic and oxidative stresses. This Arabidopsis thaliana (Mouse-ear cress) protein is Mitochondrial metalloendopeptidase OMA1.